The sequence spans 111 residues: Secreted RxLR effector protein 82 (111 aa).

The signal sequence occupies residues 1 to 17; sequence MFHLYLLLVFETRYTCL. The RxLR motif lies at 28–31; that stretch reads RWLR.

The protein belongs to the RxLR effector family.

It localises to the secreted. The protein localises to the host nucleus. In terms of biological role, secreted effector that acts as an elicitor that induces cell death in host plant cells. The sequence is that of Secreted RxLR effector protein 82 from Plasmopara viticola (Downy mildew of grapevine).